The sequence spans 298 residues: Inosose dehydratase (298 aa).

This sequence belongs to the IolE/MocC family. Glutathione is required as a cofactor. Requires Co(2+) as cofactor. It depends on Mn(2+) as a cofactor.

The enzyme catalyses scyllo-inosose = 3D-3,5/4-trihydroxycyclohexane-1,2-dione + H2O. Functionally, catalyzes the dehydration of inosose (2-keto-myo-inositol, 2KMI or 2,4,6/3,5-pentahydroxycyclohexanone) to 3D-(3,5/4)-trihydroxycyclohexane-1,2-dione (D-2,3-diketo-4-deoxy-epi-inositol). The polypeptide is Inosose dehydratase (Yersinia enterocolitica serotype O:8 / biotype 1B (strain NCTC 13174 / 8081)).